A 322-amino-acid chain; its full sequence is CMP-sialic acid transporter 1 (322 aa).

Over 1–2 (MQ) the chain is Cytoplasmic. A helical membrane pass occupies residues 3-23 (WYLVAALLTVLTSSQGILTTL). Residues 24-33 (SQSNGKYKYD) are Lumenal-facing. A helical membrane pass occupies residues 34-54 (YATIPFLAELFKLSFSSFFLW). The Cytoplasmic segment spans residues 55–75 (KECQSSSPPRMTKEWRSIRLY). A helical membrane pass occupies residues 76-96 (LVPSVIYLIHNNVQFATLTYV). Over 97–100 (DPST) the chain is Lumenal. A helical membrane pass occupies residues 101–120 (YQIMGNLKIVTTGILFRLVL). Residues 121-126 (KRKLSN) lie on the Cytoplasmic side of the membrane. The chain crosses the membrane as a helical span at residues 127 to 144 (LQWMAVVLLAVGTTTSQV). At 145–157 (KGCGDAPCDSLFS) the chain is on the lumenal side. Residues 158-178 (APFQGYMLGILSACLSALAGV) traverse the membrane as a helical segment. The Cytoplasmic portion of the chain corresponds to 179-198 (YTEYLMKKNNDSLYWQNVQL). A helical transmembrane segment spans residues 199 to 219 (YTFGVIFNMGWLIYGDFKAGF). At 220 to 233 (ERGPWWQRLFNGYS) the chain is on the lumenal side. The chain crosses the membrane as a helical span at residues 234–254 (ITTWMVVFNLGSTGLLVSWLM). Over 255–262 (KYSDNIVK) the chain is Cytoplasmic. The chain crosses the membrane as a helical span at residues 263–283 (VYSTSMGMLLTMVLSVYLFNV). Residues 284–286 (RAT) lie on the Lumenal side of the membrane.

The protein belongs to the nucleotide-sugar transporter family. CMP-Sialate:CMP antiporter (TC 2.A.7.12) subfamily.

The protein resides in the golgi apparatus membrane. Sugar transporter involved in the transport of CMP-sialic acid from the cytoplasm into the Golgi. May transport important nucleotide sugars such as CMP-Kdo (2-keto-3-deoxy-D-manno-octulosonic acid) in physiological conditions. The protein is CMP-sialic acid transporter 1 of Oryza sativa subsp. indica (Rice).